Consider the following 97-residue polypeptide: C-C motif chemokine 7 (97 aa).

Positions 1–23 are cleaved as a signal peptide; it reads MQISAALLCVLLTAAAFTVHVWA. At Gln-24 the chain carries Pyrrolidone carboxylic acid. Asn-29 carries an N-linked (GlcNAc...) asparagine glycan. Disulfide bonds link Cys-33-Cys-57 and Cys-34-Cys-73.

It belongs to the intercrine beta (chemokine CC) family. As to quaternary structure, monomer. Interacts with TNFAIP6 (via Link domain).

The protein resides in the secreted. Its function is as follows. Chemotactic factor that attracts monocytes and eosinophils, but not neutrophils. Augments monocyte anti-tumor activity. The polypeptide is C-C motif chemokine 7 (Ccl7) (Rattus norvegicus (Rat)).